Here is a 215-residue protein sequence, read N- to C-terminus: MCQSRYLLFLATLALLNHLSLARVIPVSGPARCLSQSRNLLKTTDDMVKTAREKLKHYSCTAEDIDHEDITRDQTSTLKTCLPLELHKNESCLATRETSSTTRGSCLPPQKTSLMMTLCLGSIYEDLKMYQTEFQAINAALQNHNHQQIILDKGMLVAIDELMQSLNHNGETLRQKPPVGEADPYRVKMKLCILLHAFSTRVVTINRVMGYLSSA.

The first 22 residues, 1-22, serve as a signal peptide directing secretion; sequence MCQSRYLLFLATLALLNHLSLA. 3 disulfides stabilise this stretch: Cys33–Cys106, Cys60–Cys192, and Cys81–Cys119. A glycan (N-linked (GlcNAc...) asparagine) is linked at Asn89.

The protein belongs to the IL-6 superfamily. As to quaternary structure, heterodimer with IL12B; disulfide-linked. This heterodimer is known as interleukin IL-12. Heterodimer with EBI3/IL27B; not disulfide-linked. This heterodimer is known as interleukin IL-35. Interacts with NBR1; this interaction promotes IL-12 secretion.

It localises to the secreted. Heterodimerizes with IL12B to form the IL-12 cytokine or with EBI3/IL27B to form the IL-35 cytokine. IL-12 is primarily produced by professional antigen-presenting cells (APCs) such as B-cells and dendritic cells (DCs) as well as macrophages and granulocytes and regulates T-cell and natural killer-cell responses, induces the production of interferon-gamma (IFN-gamma), favors the differentiation of T-helper 1 (Th1) cells and is an important link between innate resistance and adaptive immunity. Mechanistically, exerts its biological effects through a receptor composed of IL12R1 and IL12R2 subunits. Binding to the receptor results in the rapid tyrosine phosphorylation of a number of cellular substrates including the JAK family kinases TYK2 and JAK2. In turn, recruited STAT4 gets phosphorylated and translocates to the nucleus where it regulates cytokine/growth factor responsive genes. As part of IL-35, plays essential roles in maintaining the immune homeostasis of the liver microenvironment and also functions as an immune-suppressive cytokine. Mediates biological events through unconventional receptors composed of IL12RB2 and gp130/IL6ST heterodimers or homodimers. Signaling requires the transcription factors STAT1 and STAT4, which form a unique heterodimer that binds to distinct DNA sites. This is Interleukin-12 subunit alpha (Il12a) from Mus musculus (Mouse).